Here is a 102-residue protein sequence, read N- to C-terminus: Large ribosomal subunit protein bL21 (102 aa).

This sequence belongs to the bacterial ribosomal protein bL21 family. Part of the 50S ribosomal subunit. Contacts protein L20.

This protein binds to 23S rRNA in the presence of protein L20. This chain is Large ribosomal subunit protein bL21, found in Phytoplasma australiense.